The chain runs to 595 residues: Adenine deaminase 2 (595 aa).

The protein belongs to the metallo-dependent hydrolases superfamily. Adenine deaminase family. The cofactor is Mn(2+).

The enzyme catalyses adenine + H2O + H(+) = hypoxanthine + NH4(+). This is Adenine deaminase 2 from Rhizobium johnstonii (strain DSM 114642 / LMG 32736 / 3841) (Rhizobium leguminosarum bv. viciae).